Consider the following 216-residue polypeptide: Endoplasmic reticulum vesicle protein 25 (216 aa).

Positions 1 to 21 (MMVSLKSSLFFMLALLTVVHA) are cleaved as a signal peptide. Residues 22–184 (LNFDIPAKTN…TNESTNERVK (163 aa)) lie on the Lumenal side of the membrane. The 117-residue stretch at 34-150 (PFCLREYVGE…LEPVEADIRR (117 aa)) folds into the GOLD domain. A helical membrane pass occupies residues 185–205 (NFAYLTFISLFVLVIWQILYL). At 206-216 (RSFFQRKHLIP) the chain is on the cytoplasmic side.

Belongs to the EMP24/GP25L family.

The protein resides in the endoplasmic reticulum membrane. The protein localises to the golgi apparatus membrane. Its function is as follows. Constituent of COPII-coated endoplasmic reticulum-derived transport vesicles. Required for efficient transport of a subset of secretory proteins to the Golgi. Facilitates retrograde transport from the Golgi to the endoplasmic reticulum. The sequence is that of Endoplasmic reticulum vesicle protein 25 (erv25) from Schizosaccharomyces pombe (strain 972 / ATCC 24843) (Fission yeast).